We begin with the raw amino-acid sequence, 160 residues long: MTKEVIVESFELDHTIVKAPYVRLISEEFGPKGDRITNFDVRLVQPNQNSIETAGLHTIEHLLAKLIRQRIDGMIDCSPFGCRTGFHLIMWGKHSSTDIAKVIKSSLEEIATGITWEDVPGTTLESCGNYKDHNLFAAKEWAQLIIDQGISDDPFSRHVI.

Fe cation-binding residues include H57, H61, and C127.

Belongs to the LuxS family. Homodimer. It depends on Fe cation as a cofactor.

It catalyses the reaction S-(5-deoxy-D-ribos-5-yl)-L-homocysteine = (S)-4,5-dihydroxypentane-2,3-dione + L-homocysteine. Involved in the synthesis of autoinducer 2 (AI-2) which is secreted by bacteria and is used to communicate both the cell density and the metabolic potential of the environment. The regulation of gene expression in response to changes in cell density is called quorum sensing. Catalyzes the transformation of S-ribosylhomocysteine (RHC) to homocysteine (HC) and 4,5-dihydroxy-2,3-pentadione (DPD). This is S-ribosylhomocysteine lyase from Streptococcus pyogenes serotype M4 (strain MGAS10750).